A 351-amino-acid polypeptide reads, in one-letter code: ATP-dependent 6-phosphofructokinase subunit gamma (351 aa).

As to quaternary structure, heterododecamer of 4 alpha, 4 beta and 4 gamma chains. The gamma chain bridges the N-terminal halves of the alpha and beta subunits.

It localises to the cytoplasm. The protein operates within carbohydrate degradation; glycolysis; D-glyceraldehyde 3-phosphate and glycerone phosphate from D-glucose: step 3/4. Its function is as follows. Structural subunit of pyrophosphate--fructose 6-phosphate 1-phosphotransferase. Not required for catalytic activity. Fine-tunes allosteric regulation of the ATP-PFK by ATP, fructose 2,6-bisphosphate and AMP. This chain is ATP-dependent 6-phosphofructokinase subunit gamma (PFK3), found in Komagataella phaffii (strain GS115 / ATCC 20864) (Yeast).